We begin with the raw amino-acid sequence, 259 residues long: Ubiquitin-conjugating enzyme E2 J2 (259 aa).

The Cytoplasmic portion of the chain corresponds to 1–226 (MSSTSSKRAP…AGLQQANRHH (226 aa)). A UBC core domain is found at 12-162 (TATQRLKQDY…DKVFCELFPE (151 aa)). Cys-94 acts as the Glycyl thioester intermediate in catalysis. A helical; Anchor for type IV membrane protein transmembrane segment spans residues 227 to 247 (GLLGGALANLFVIVGFAAFAY). Over 248–259 (TVKYVLRSIAQE) the chain is Lumenal.

It belongs to the ubiquitin-conjugating enzyme family. Auto-ubiquitinated.

Its subcellular location is the endoplasmic reticulum membrane. It catalyses the reaction S-ubiquitinyl-[E1 ubiquitin-activating enzyme]-L-cysteine + [E2 ubiquitin-conjugating enzyme]-L-cysteine = [E1 ubiquitin-activating enzyme]-L-cysteine + S-ubiquitinyl-[E2 ubiquitin-conjugating enzyme]-L-cysteine.. It functions in the pathway protein modification; protein ubiquitination. Functionally, catalyzes the covalent attachment of ubiquitin to other proteins. Seems to function in the selective degradation of misfolded membrane proteins from the endoplasmic reticulum (ERAD). In cooperation with the GATOR2 complex, catalyzes 'Lys-6'-linked ubiquitination of NPRL2. In Homo sapiens (Human), this protein is Ubiquitin-conjugating enzyme E2 J2 (UBE2J2).